The chain runs to 193 residues: Ion-translocating oxidoreductase complex subunit A (193 aa).

6 consecutive transmembrane segments (helical) span residues 5-25, 39-59, 63-83, 102-122, 134-154, and 171-191; these read LLLF…FLGL, MGMG…AWLI, ILIP…VIAV, LLGI…VALL, ALYG…FAAI, and AIAL…SGLV.

It belongs to the NqrDE/RnfAE family. In terms of assembly, the complex is composed of six subunits: RsxA, RsxB, RsxC, RsxD, RsxE and RsxG.

The protein resides in the cell inner membrane. Part of a membrane-bound complex that couples electron transfer with translocation of ions across the membrane. Required to maintain the reduced state of SoxR. This chain is Ion-translocating oxidoreductase complex subunit A, found in Shigella flexneri serotype 5b (strain 8401).